A 158-amino-acid chain; its full sequence is 2-C-methyl-D-erythritol 2,4-cyclodiphosphate synthase (158 aa).

The a divalent metal cation site is built by D8 and H10. 4-CDP-2-C-methyl-D-erythritol 2-phosphate-binding positions include 8 to 10 (DVH) and 34 to 35 (HS). H42 provides a ligand contact to a divalent metal cation. 4-CDP-2-C-methyl-D-erythritol 2-phosphate-binding positions include 56-58 (DIG), 61-65 (FPDTD), 100-106 (AQAPKMA), 132-135 (TTSE), F139, and R142.

Belongs to the IspF family. Homotrimer. The cofactor is a divalent metal cation.

The catalysed reaction is 4-CDP-2-C-methyl-D-erythritol 2-phosphate = 2-C-methyl-D-erythritol 2,4-cyclic diphosphate + CMP. It participates in isoprenoid biosynthesis; isopentenyl diphosphate biosynthesis via DXP pathway; isopentenyl diphosphate from 1-deoxy-D-xylulose 5-phosphate: step 4/6. Its function is as follows. Involved in the biosynthesis of isopentenyl diphosphate (IPP) and dimethylallyl diphosphate (DMAPP), two major building blocks of isoprenoid compounds. Catalyzes the conversion of 4-diphosphocytidyl-2-C-methyl-D-erythritol 2-phosphate (CDP-ME2P) to 2-C-methyl-D-erythritol 2,4-cyclodiphosphate (ME-CPP) with a corresponding release of cytidine 5-monophosphate (CMP). The polypeptide is 2-C-methyl-D-erythritol 2,4-cyclodiphosphate synthase (Aliivibrio fischeri (strain ATCC 700601 / ES114) (Vibrio fischeri)).